We begin with the raw amino-acid sequence, 986 residues long: Ephrin type-A receptor 4 (986 aa).

A signal peptide spans 1 to 19 (MAGIFYFALFSCLFGICDA). Residues 20–547 (VTGSRVYPAN…RIIGDGANST (528 aa)) are Extracellular-facing. Positions 30-209 (EVTLLDSRSV…FYKKCPLTVR (180 aa)) constitute an Eph LBD domain. 3 N-linked (GlcNAc...) asparagine glycosylation sites follow: asparagine 235, asparagine 340, and asparagine 408. Fibronectin type-III domains are found at residues 328–439 (PPSA…TNQA) and 440–537 (APSS…TVPS). An N-linked (GlcNAc...) asparagine glycan is attached at asparagine 545. The helical transmembrane segment at 548–569 (VLLVSVSGSVVLVVILIAAFVI) threads the bilayer. At 570 to 986 (SRRRSKYSKA…QQMHGRMVPV (417 aa)) the chain is on the cytoplasmic side. Tyrosine 596 and tyrosine 602 each carry phosphotyrosine; by autocatalysis. In terms of domain architecture, Protein kinase spans 621-882 (IKIEKVIGVG…QIVNMLDKLI (262 aa)). Residues 627–635 (IGVGEFGEV) and lysine 653 contribute to the ATP site. The active-site Proton acceptor is aspartate 746. Phosphotyrosine; by autocatalysis occurs at positions 779 and 928. The SAM domain maps to 911-975 (SAVVSVGDWL…LSSVQAMRTQ (65 aa)). The PDZ-binding motif lies at 984 to 986 (VPV).

This sequence belongs to the protein kinase superfamily. Tyr protein kinase family. Ephrin receptor subfamily. Heterotetramer upon binding of the ligand. The heterotetramer is composed of an ephrin dimer and a receptor dimer. Oligomerization is probably required to induce biological responses. Interacts (phosphorylated at position Tyr-602) with FYN. Interacts with CDK5, CDK5R1 and NGEF; upon activation by EFNA1 induces NGEF phosphorylation by the kinase CDK5. Interacts with CHN1; effector of EPHA4 in axon guidance linking EPHA4 activation to RAC1 regulation. Interacts (via PDZ motif) with SIPA1L1 (via PDZ domain); controls neuronal morphology through regulation of the RAP1 (RAP1A or RAP1B) and RAP2 (RAP2A, RAP2B or RAP2C) GTPases. Forms a ternary complex composed of ADAM10, CADH1 and EPHA4; within the complex, CADH1 is cleaved by ADAM10 which disrupts adherens junctions. Ubiquitous.

It localises to the cell membrane. It is found in the cell projection. The protein localises to the axon. The protein resides in the dendrite. Its subcellular location is the postsynaptic density membrane. It localises to the early endosome. It is found in the cell junction. The protein localises to the adherens junction. The enzyme catalyses L-tyrosyl-[protein] + ATP = O-phospho-L-tyrosyl-[protein] + ADP + H(+). Functionally, receptor tyrosine kinase which binds membrane-bound ephrin family ligands residing on adjacent cells, leading to contact-dependent bidirectional signaling into neighboring cells. The signaling pathway downstream of the receptor is referred to as forward signaling while the signaling pathway downstream of the ephrin ligand is referred to as reverse signaling. Highly promiscuous, it has the unique property among Eph receptors to bind and to be physiologically activated by both GPI-anchored ephrin-A and transmembrane ephrin-B ligands including EFNA1 and EFNB3. Upon activation by ephrin ligands, modulates cell morphology and integrin-dependent cell adhesion through regulation of the Rac, Rap and Rho GTPases activity. Plays an important role in the development of the nervous system controlling different steps of axonal guidance including the establishment of the corticospinal projections. May also control the segregation of motor and sensory axons during neuromuscular circuit development. In addition to its role in axonal guidance plays a role in synaptic plasticity. Activated by EFNA1 phosphorylates CDK5 at 'Tyr-15' which in turn phosphorylates NGEF regulating RHOA and dendritic spine morphogenesis. In the nervous system, also plays a role in repair after injury preventing axonal regeneration and in angiogenesis playing a role in central nervous system vascular formation. Additionally, its promiscuity makes it available to participate in a variety of cell-cell signaling regulating for instance the development of the thymic epithelium. During development of the cochlear organ of Corti, regulates pillar cell separation by forming a ternary complex with ADAM10 and CADH1 which facilitates the cleavage of CADH1 by ADAM10 and disruption of adherens junctions. Phosphorylates CAPRIN1, promoting CAPRIN1-dependent formation of a membraneless compartment. The polypeptide is Ephrin type-A receptor 4 (EPHA4) (Homo sapiens (Human)).